We begin with the raw amino-acid sequence, 722 residues long: Homeobox-leucine zipper protein HDG11 (722 aa).

Positions 1-19 (MSFVVGVGGSGSGSGGDGG) are enriched in gly residues. The tract at residues 1–42 (MSFVVGVGGSGSGSGGDGGGSHHHDGSETDRKKKRYHRHTAQ) is disordered. Over residues 20–31 (GSHHHDGSETDR) the composition is skewed to basic and acidic residues. The segment at residues 32 to 91 (KKKRYHRHTAQQIQRLESSFKECPHPDEKQRNQLSRELGLAPRQIKFWFQNRRTQLKAQH) is a DNA-binding region (homeobox). Residues 81 to 161 (QNRRTQLKAQ…LERMSTIASK (81 aa)) adopt a coiled-coil conformation. The region spanning 227–460 (SDMDKPIMTG…LQRMCERFAS (234 aa)) is the START domain.

The protein belongs to the HD-ZIP homeobox family. Class IV subfamily. Interacts with BBM. As to expression, expressed in apical meristems and young epidermal tissue including trichomes and stipules. Expressed in lateral root tips, the L1 layer of apical inflorescence meristems and early flower primordia, carpel and petal epidermis, stigma papillae, ovule primordia, nucellus and embryo.

It is found in the nucleus. Transcription factor which acts as a positive regulator of drought stress tolerance. Can transactivate CIPK3, NCED3 and ERECTA. Transactivates several cell-wall-loosening protein genes by directly binding to HD motifs in their promoters. These target genes play important roles in coordinating cell-wall extensibility with root development and growth. Transactivates CYP74A/AOS, AOC3, OPR3 and 4CLL5/OPCL1 genes by directly binding to HD motifs in their promoters. These target genes are involved in jasmonate (JA) biosynthesis, and JA signaling affects root architecture by activating auxin signaling, which promotes lateral root formation. Acts as a negative regulator of trichome branching. Required for the establishment of giant cell identity on the abaxial side of sepals. Seems to promote cell differentiation. May regulate cell differentiation and proliferation during root and shoot meristem development. This Arabidopsis thaliana (Mouse-ear cress) protein is Homeobox-leucine zipper protein HDG11.